The chain runs to 123 residues: Fluoride-specific ion channel FluC (123 aa).

Transmembrane regions (helical) follow at residues methionine 7–leucine 27, methionine 39–phenylalanine 59, phenylalanine 68–phenylalanine 88, and leucine 101–alanine 121. Na(+)-binding residues include glycine 75 and serine 78.

It belongs to the fluoride channel Fluc/FEX (TC 1.A.43) family.

It localises to the cell membrane. It catalyses the reaction fluoride(in) = fluoride(out). Its activity is regulated as follows. Na(+) is not transported, but it plays an essential structural role and its presence is essential for fluoride channel function. Its function is as follows. Fluoride-specific ion channel. Important for reducing fluoride concentration in the cell, thus reducing its toxicity. The chain is Fluoride-specific ion channel FluC from Thermococcus kodakarensis (strain ATCC BAA-918 / JCM 12380 / KOD1) (Pyrococcus kodakaraensis (strain KOD1)).